The primary structure comprises 475 residues: F-box protein At3g59150 (475 aa).

Residues 12 to 58 enclose the F-box domain; sequence GDVISNLPNDLLCRILSYLSTKEAALTSILSKRWSNLLLSIPILDFD.

This Arabidopsis thaliana (Mouse-ear cress) protein is F-box protein At3g59150.